The following is an 833-amino-acid chain: MSFYNHKEIEPKWQGYWAEHHTFKTGTDASKPKFYALDMFPYPSGAGLHVGHPEGYTATDILSRYKRAQGYNVLHPMGWDAFGLPAEQYAMDTGNDPAEFTAENIANFKRQINALGFSYDWDREVNTTDPNYYKWTQWIFTKLYEKGLAYEAEVPVNWVEELGTAIANEEVLPDGTSERGGYPVVRKPMRQWMLKITAYAERLLNDLDELDWPESIKDMQRNWIGKSTGANVTFKVKGTDKEFTVFTTRPDTLFGATFTVLAPEHELVDAITSTEQAEAVADYKHQASLKSDLARTDLAKEKTGVWTGAYAINPVNGKEIPIWIADYVLASYGTGAVMAVPAHDQRDWEFAKQFDLPIVEVLEGGNVEEAAYTEDGLHVNSDFLDGLNKEDAIAKIVAWLEEKGCGQEKVTYRLRDWLFSRQRYWGEPIPIIHWEDGTSTAVPESELPLVLPVTKDIRPSGTGESPLANLTDWLEVTREDGVKGRRETNTMPQWAGSSWYYLRYIDPHNTEKLADEDLLKQWLPVDIYVGGAEHAVLHLLYARFWHKFLYDLGVVPTKEPFQKLFNQGMILGTSYRDHRGALVATDKVEKRDGSFFHVETGEELEQAPAKMSKSLKNVVNPDDVVEQYGADTLRVYEMFMGPLDASIAWSEEGLEGSRKFLDRVYRLITSKEILAENNGALDKVYNETVKAVTEQIESLKFNTAIAQLMVFVNAANKEDKLYVDYAKGFIQLIAPFAPHLAEELWQTVAETGESISYVAWPTWDESKLVEDEIEIVVQIKGKVRAKLMVAKDLSREELQEIALADEKVKAEIDGKEIVKVIAVPNKLVNIVVK.

The short motif at P41 to H52 is the 'HIGH' region element. The short motif at K610–S614 is the 'KMSKS' region element. Residue K613 coordinates ATP.

The protein belongs to the class-I aminoacyl-tRNA synthetase family.

The protein resides in the cytoplasm. It catalyses the reaction tRNA(Leu) + L-leucine + ATP = L-leucyl-tRNA(Leu) + AMP + diphosphate. The protein is Leucine--tRNA ligase of Streptococcus pneumoniae (strain Hungary19A-6).